We begin with the raw amino-acid sequence, 109 residues long: Large ribosomal subunit protein uL22 (109 aa).

Belongs to the universal ribosomal protein uL22 family. In terms of assembly, part of the 50S ribosomal subunit.

Its function is as follows. This protein binds specifically to 23S rRNA; its binding is stimulated by other ribosomal proteins, e.g. L4, L17, and L20. It is important during the early stages of 50S assembly. It makes multiple contacts with different domains of the 23S rRNA in the assembled 50S subunit and ribosome. The globular domain of the protein is located near the polypeptide exit tunnel on the outside of the subunit, while an extended beta-hairpin is found that lines the wall of the exit tunnel in the center of the 70S ribosome. The sequence is that of Large ribosomal subunit protein uL22 from Psychrobacter sp. (strain PRwf-1).